A 449-amino-acid chain; its full sequence is Phosphoglucosamine mutase (449 aa).

Ser101 acts as the Phosphoserine intermediate in catalysis. 4 residues coordinate Mg(2+): Ser101, Asp242, Asp244, and Asp246. Ser101 is subject to Phosphoserine.

The protein belongs to the phosphohexose mutase family. Mg(2+) serves as cofactor. Post-translationally, activated by phosphorylation.

It carries out the reaction alpha-D-glucosamine 1-phosphate = D-glucosamine 6-phosphate. Its function is as follows. Catalyzes the conversion of glucosamine-6-phosphate to glucosamine-1-phosphate. The sequence is that of Phosphoglucosamine mutase from Bradyrhizobium sp. (strain BTAi1 / ATCC BAA-1182).